Reading from the N-terminus, the 245-residue chain is 1-(5-phosphoribosyl)-5-[(5-phosphoribosylamino)methylideneamino] imidazole-4-carboxamide isomerase (245 aa).

Asp-7 acts as the Proton acceptor in catalysis. Catalysis depends on Asp-129, which acts as the Proton donor.

It belongs to the HisA/HisF family.

The protein localises to the cytoplasm. The catalysed reaction is 1-(5-phospho-beta-D-ribosyl)-5-[(5-phospho-beta-D-ribosylamino)methylideneamino]imidazole-4-carboxamide = 5-[(5-phospho-1-deoxy-D-ribulos-1-ylimino)methylamino]-1-(5-phospho-beta-D-ribosyl)imidazole-4-carboxamide. Its pathway is amino-acid biosynthesis; L-histidine biosynthesis; L-histidine from 5-phospho-alpha-D-ribose 1-diphosphate: step 4/9. The sequence is that of 1-(5-phosphoribosyl)-5-[(5-phosphoribosylamino)methylideneamino] imidazole-4-carboxamide isomerase from Shewanella sp. (strain ANA-3).